A 204-amino-acid polypeptide reads, in one-letter code: Thymidylate kinase (204 aa).

11–18 contributes to the ATP binding site; the sequence is GLDKSGKT.

This sequence belongs to the thymidylate kinase family.

It carries out the reaction dTMP + ATP = dTDP + ADP. Its pathway is pyrimidine metabolism; dTTP biosynthesis. The chain is Thymidylate kinase (TMK) from Cowpox virus (strain GRI-90 / Grishak) (CPV).